A 660-amino-acid polypeptide reads, in one-letter code: Phosphatidylinositol-3-phosphate phosphatase MTMR7 (660 aa).

The region spanning G126–Y504 is the Myotubularin phosphatase domain. 3 residues coordinate a 1,2-diacyl-sn-glycero-3-phospho-(1D-myo-inositol-3-phosphate): N250, N275, and I276. C338 (phosphocysteine intermediate) is an active-site residue. A 1,2-diacyl-sn-glycero-3-phospho-(1D-myo-inositol-3-phosphate) contacts are provided by S339, D340, G341, W342, D343, R344, and R384. Residues R514 to K558 adopt a coiled-coil conformation. A disordered region spans residues K554–A660. A compositionally biased stretch (polar residues) spans S566–Q596. At T578 the chain carries Phosphothreonine. The span at A641 to D653 shows a compositional bias: basic and acidic residues.

Belongs to the protein-tyrosine phosphatase family. Non-receptor class myotubularin subfamily. In terms of assembly, heterodimer (via C-terminus) with MTMR9 (via coiled coil domain); the interaction enhances MTMR7 catalytic activity. Does not homodimerize. Interacts with RAB1B (in GDP-bound form).

It localises to the cytoplasm. The protein localises to the endomembrane system. The catalysed reaction is a 1,2-diacyl-sn-glycero-3-phospho-(1D-myo-inositol-3-phosphate) + H2O = a 1,2-diacyl-sn-glycero-3-phospho-(1D-myo-inositol) + phosphate. It carries out the reaction 1D-myo-inositol 1,3-bisphosphate + H2O = 1D-myo-inositol 1-phosphate + phosphate. Its activity is regulated as follows. Interaction with MTMR9 increases phosphatase activity. In terms of biological role, lipid phosphatase that specifically dephosphorylates the D-3 position of phosphatidylinositol 3-phosphate (PtdIns(3)P) and inositol 1,3-bisphosphate (Ins(1,3)P2). This chain is Phosphatidylinositol-3-phosphate phosphatase MTMR7, found in Pongo abelii (Sumatran orangutan).